Reading from the N-terminus, the 97-residue chain is YcgL domain-containing protein PA14_47450 (97 aa).

A YcgL domain is found at 3–87 (RICSVYKSPR…GEEEYIEHLP (85 aa)).

This Pseudomonas aeruginosa (strain UCBPP-PA14) protein is YcgL domain-containing protein PA14_47450.